Consider the following 208-residue polypeptide: Fibroblast growth factor 6 (208 aa).

The first 37 residues, 1 to 37 (MALGQRLFITMSRGAGRVQGTLQALVFLGVLVGMVVP), serve as a signal peptide directing secretion. A glycan (N-linked (GlcNAc...) asparagine) is linked at N45. An intrachain disulfide couples C90 to C157.

It belongs to the heparin-binding growth factors family. As to quaternary structure, interacts with FGFR1, FGFR2 and FGFR4. Affinity between fibroblast growth factors (FGFs) and their receptors is increased by heparan sulfate glycosaminoglycans that function as coreceptors. Embryos, adult muscles and adult testis.

The protein resides in the secreted. It localises to the extracellular space. In terms of biological role, plays an important role in the regulation of cell proliferation, cell differentiation, angiogenesis and myogenesis, and is required for normal muscle regeneration. The protein is Fibroblast growth factor 6 (Fgf6) of Mus musculus (Mouse).